The sequence spans 40 residues: Adenylate kinase (40 aa).

10–15 contributes to the ATP binding site; the sequence is GAGKGT. Residues 30–40 are NMP; sequence STGDMFIKAIK. T31 contacts AMP.

This sequence belongs to the adenylate kinase family. Monomer.

It localises to the cytoplasm. It carries out the reaction AMP + ATP = 2 ADP. The protein operates within purine metabolism; AMP biosynthesis via salvage pathway; AMP from ADP: step 1/1. Functionally, catalyzes the reversible transfer of the terminal phosphate group between ATP and AMP. Plays an important role in cellular energy homeostasis and in adenine nucleotide metabolism. This chain is Adenylate kinase (adk), found in Staphylococcus carnosus.